Reading from the N-terminus, the 289-residue chain is Cbb3-type cytochrome c oxidase subunit FixP (289 aa).

At 1–33 (MADKHKHVDEVSGVETTGHEWDGIRELNNPMPR) the chain is on the cytoplasmic side. The helical transmembrane segment at 34 to 56 (WWVYSFYATIIWAIGYAIAYPSW) threads the bilayer. The Periplasmic portion of the chain corresponds to 57-289 (PMLTEATKGM…VFVHSLGGGE (233 aa)). Cytochrome c domains are found at residues 110-198 (FAVS…VSLT) and 205-286 (HLVQ…HSLG). Residues Cys-123, Cys-126, His-127, Met-175, Cys-218, Cys-221, His-222, and Met-263 each contribute to the heme c site.

This sequence belongs to the CcoP / FixP family. As to quaternary structure, component of the cbb3-type cytochrome c oxidase at least composed of FixN, FixO, FixQ and FixP. It depends on heme c as a cofactor.

It is found in the cell inner membrane. The protein operates within energy metabolism; oxidative phosphorylation. Functionally, C-type cytochrome. Part of the cbb3-type cytochrome c oxidase complex. FixP subunit is required for transferring electrons from donor cytochrome c via its heme groups to FixO subunit. From there, electrons are shuttled to the catalytic binuclear center of FixN subunit where oxygen reduction takes place. The complex also functions as a proton pump. The chain is Cbb3-type cytochrome c oxidase subunit FixP from Rhizobium meliloti (strain 1021) (Ensifer meliloti).